A 492-amino-acid polypeptide reads, in one-letter code: 3-octaprenyl-4-hydroxybenzoate carboxy-lyase (492 aa).

Residue Asn-175 participates in Mn(2+) binding. Residues 178 to 180 (IYR), 192 to 194 (RWL), and 197 to 198 (RG) contribute to the prenylated FMN site. Glu-241 contributes to the Mn(2+) binding site. Asp-290 functions as the Proton donor in the catalytic mechanism.

It belongs to the UbiD family. Homohexamer. It depends on prenylated FMN as a cofactor. Mn(2+) is required as a cofactor.

The protein resides in the cell membrane. It carries out the reaction a 4-hydroxy-3-(all-trans-polyprenyl)benzoate + H(+) = a 2-(all-trans-polyprenyl)phenol + CO2. Its pathway is cofactor biosynthesis; ubiquinone biosynthesis. Functionally, catalyzes the decarboxylation of 3-octaprenyl-4-hydroxy benzoate to 2-octaprenylphenol, an intermediate step in ubiquinone biosynthesis. The polypeptide is 3-octaprenyl-4-hydroxybenzoate carboxy-lyase (Salmonella typhimurium (strain LT2 / SGSC1412 / ATCC 700720)).